We begin with the raw amino-acid sequence, 29 residues long: Cytochrome b6-f complex subunit 8 (29 aa).

A helical transmembrane segment spans residues 3–23 (LITITWASVMVAFTFSLSLVV).

The protein belongs to the PetN family. The 4 large subunits of the cytochrome b6-f complex are cytochrome b6, subunit IV (17 kDa polypeptide, PetD), cytochrome f and the Rieske protein, while the 4 small subunits are PetG, PetL, PetM and PetN. The complex functions as a dimer.

It is found in the plastid. The protein resides in the chloroplast thylakoid membrane. In terms of biological role, component of the cytochrome b6-f complex, which mediates electron transfer between photosystem II (PSII) and photosystem I (PSI), cyclic electron flow around PSI, and state transitions. The polypeptide is Cytochrome b6-f complex subunit 8 (Chaetosphaeridium globosum (Charophycean green alga)).